The chain runs to 341 residues: Glycerol-3-phosphate dehydrogenase [NAD(P)+] (341 aa).

NADPH is bound by residues serine 14, phenylalanine 15, arginine 35, and lysine 108. Residues lysine 108 and glycine 136 each coordinate sn-glycerol 3-phosphate. Alanine 140 lines the NADPH pocket. Residues lysine 191, aspartate 244, serine 254, arginine 255, and asparagine 256 each contribute to the sn-glycerol 3-phosphate site. The active-site Proton acceptor is the lysine 191. An NADPH-binding site is contributed by arginine 255. NADPH is bound by residues valine 279 and glutamate 281.

Belongs to the NAD-dependent glycerol-3-phosphate dehydrogenase family.

The protein resides in the cytoplasm. It carries out the reaction sn-glycerol 3-phosphate + NAD(+) = dihydroxyacetone phosphate + NADH + H(+). It catalyses the reaction sn-glycerol 3-phosphate + NADP(+) = dihydroxyacetone phosphate + NADPH + H(+). It functions in the pathway membrane lipid metabolism; glycerophospholipid metabolism. Catalyzes the reduction of the glycolytic intermediate dihydroxyacetone phosphate (DHAP) to sn-glycerol 3-phosphate (G3P), the key precursor for phospholipid synthesis. The sequence is that of Glycerol-3-phosphate dehydrogenase [NAD(P)+] from Pseudomonas entomophila (strain L48).